Consider the following 668-residue polypeptide: Probable tRNA (uracil-O(2)-)-methyltransferase (668 aa).

Residues 441 to 460 (QHTDSLHISTKSSLDKDDPP) are disordered. The segment at 620–649 (LKTRLCWFYVHHPNGCPRVAKSCPYAHGAE) adopts a C3H1-type zinc-finger fold.

The protein belongs to the TRM44 family.

It is found in the cytoplasm. The enzyme catalyses uridine(44) in tRNA(Ser) + S-adenosyl-L-methionine = 2'-O-methyluridine(44) in tRNA(Ser) + S-adenosyl-L-homocysteine + H(+). Its function is as follows. Probable adenosyl-L-methionine (AdoMet)-dependent tRNA (uracil-O(2)-)-methyltransferase. The sequence is that of Probable tRNA (uracil-O(2)-)-methyltransferase (trmt44) from Xenopus laevis (African clawed frog).